The primary structure comprises 423 residues: UPF0229 protein Pmen_4018 (423 aa).

The disordered stretch occupies residues 65-108 (HHGRGGKQTIVHPGNKEFTAGERIPRPQGGGGGRGSGKASNSGE).

The protein belongs to the UPF0229 family.

This chain is UPF0229 protein Pmen_4018, found in Ectopseudomonas mendocina (strain ymp) (Pseudomonas mendocina).